The primary structure comprises 263 residues: Small ribosomal subunit protein eS4 (263 aa).

The S4 RNA-binding domain maps to 42 to 104 (LPLIVFLRNR…TGEHFRLVYD (63 aa)).

The protein belongs to the eukaryotic ribosomal protein eS4 family.

The protein is Small ribosomal subunit protein eS4 (RPS4Y1) of Pan paniscus (Pygmy chimpanzee).